We begin with the raw amino-acid sequence, 151 residues long: Transcription elongation factor Spt5 (151 aa).

The KOW domain occupies 98 to 128; the sequence is PGQVVEIVAGAFKGMKARVIDVNQSKGQVTV.

It belongs to the archaeal Spt5 family. As to quaternary structure, heterodimer composed of Spt4 and Spt5. Interacts with RNA polymerase (RNAP).

Stimulates transcription elongation. In Aeropyrum pernix (strain ATCC 700893 / DSM 11879 / JCM 9820 / NBRC 100138 / K1), this protein is Transcription elongation factor Spt5.